Here is a 162-residue protein sequence, read N- to C-terminus: Protein A49R (162 aa).

It belongs to the poxviridae A49 protein family. As to quaternary structure, interacts with host BTRC; this interaction inhibits NF-kappa-B activation.

The protein resides in the host cytoplasm. It localises to the host nucleus. In terms of biological role, plays a role in the inhibition of host NF-kappa-B activation. Interacts with host BTRC and thereby diminishes ubiquitination of NF-kappa-B inhibitor alpha/NFKBIA. This stabilizes NFKBIA and its interaction with NF-kappaB, so retaining p65/RELA in the cytoplasm and preventing NF-kappa-B-dependent gene expression. This Bos taurus (Bovine) protein is Protein A49R.